Here is a 624-residue protein sequence, read N- to C-terminus: Ubiquitin-associated and SH3 domain-containing protein A (624 aa).

One can recognise a UBA domain in the interval 19-60; that stretch reads RSTPSLLDPLLAMGFPTHTALKALAATGRKTAEAAADWLHGH. In terms of domain architecture, SH3 spans 238 to 303; the sequence is VHYQTLKALF…PENYTERANE (66 aa). The segment at 358–624 is phosphatase-like; the sequence is RRGILVVRHG…FNWRNWISSN (267 aa).

Homodimer or homooligomer. Interacts with CBL. Part of a complex containing CBL and activated EGFR. Interacts with ubiquitin and with mono-ubiquitinated proteins. Interacts with dynamin.

The protein localises to the cytoplasm. It localises to the nucleus. In terms of biological role, interferes with CBL-mediated down-regulation and degradation of receptor-type tyrosine kinases. Promotes accumulation of activated target receptors, such as T-cell receptors, EGFR and PDGFRB, on the cell surface. May inhibit dynamin-dependent endocytic pathways by functionally sequestering dynamin via its SH3 domain. Exhibits negligible protein tyrosine phosphatase activity at neutral pH. May act as a dominant-negative regulator of UBASH3B-dependent dephosphorylation. The polypeptide is Ubiquitin-associated and SH3 domain-containing protein A (Ubash3a) (Mus musculus (Mouse)).